Here is a 221-residue protein sequence, read N- to C-terminus: High frequency lysogenization protein HflD homolog (221 aa).

It belongs to the HflD family.

The protein localises to the cytoplasm. The protein resides in the cell inner membrane. This chain is High frequency lysogenization protein HflD homolog, found in Acidithiobacillus ferrooxidans (strain ATCC 23270 / DSM 14882 / CIP 104768 / NCIMB 8455) (Ferrobacillus ferrooxidans (strain ATCC 23270)).